Consider the following 284-residue polypeptide: Ermin (284 aa).

A disordered region spans residues 1–23; that stretch reads MTDVPATFTQAECNGDKPPENGQ. Serine 73 carries the phosphoserine modification. Positions 110–251 are disordered; that stretch reads REGHQWEKIP…PTLGKKSDIS (142 aa). Basic and acidic residues-rich tracts occupy residues 126 to 140 and 171 to 183; these read EIRR…QPLK and LHSK…KVWD. Over residues 184 to 200 the composition is skewed to acidic residues; sequence EEIDDDDDDNCNNDEDE. Over residues 201–220 the composition is skewed to basic and acidic residues; that stretch reads VRVIEFKKKHEEVSQFKEEG. Phosphoserine is present on residues serine 214, serine 226, serine 230, and serine 233. The span at 225–235 shows a compositional bias: low complexity; that stretch reads DSPLSSASSQA. Threonine 237 is modified (phosphothreonine). The binds actin stretch occupies residues 265–284; the sequence is KIRKGNTKQRIDEFESMMHL.

As to quaternary structure, binds actin. Highly expressed in adult and fetal brain. Expressed at intermediate levels in the lung and liver.

It localises to the cytoplasm. The protein localises to the cytoskeleton. Functionally, plays a role in cytoskeletal rearrangements during the late wrapping and/or compaction phases of myelinogenesis as well as in maintenance and stability of myelin sheath in the adult. May play an important role in late-stage oligodendroglia maturation, myelin/Ranvier node formation during CNS development, and in the maintenance and plasticity of related structures in the mature CNS. In Homo sapiens (Human), this protein is Ermin (ERMN).